The primary structure comprises 459 residues: Exodeoxyribonuclease 7 large subunit (459 aa).

This sequence belongs to the XseA family. Heterooligomer composed of large and small subunits.

Its subcellular location is the cytoplasm. The enzyme catalyses Exonucleolytic cleavage in either 5'- to 3'- or 3'- to 5'-direction to yield nucleoside 5'-phosphates.. Bidirectionally degrades single-stranded DNA into large acid-insoluble oligonucleotides, which are then degraded further into small acid-soluble oligonucleotides. This is Exodeoxyribonuclease 7 large subunit from Pseudomonas entomophila (strain L48).